Consider the following 266-residue polypeptide: Glucosamine-6-phosphate deaminase (266 aa).

Asp72 functions as the Proton acceptor; for enolization step in the catalytic mechanism. The active-site For ring-opening step is Asp141. His143 serves as the catalytic Proton acceptor; for ring-opening step. The active-site For ring-opening step is Glu148.

Belongs to the glucosamine/galactosamine-6-phosphate isomerase family. NagB subfamily. Homohexamer.

It carries out the reaction alpha-D-glucosamine 6-phosphate + H2O = beta-D-fructose 6-phosphate + NH4(+). It functions in the pathway amino-sugar metabolism; N-acetylneuraminate degradation; D-fructose 6-phosphate from N-acetylneuraminate: step 5/5. Allosterically activated by N-acetylglucosamine 6-phosphate (GlcNAc6P). Catalyzes the reversible isomerization-deamination of glucosamine 6-phosphate (GlcN6P) to form fructose 6-phosphate (Fru6P) and ammonium ion. In Erwinia tasmaniensis (strain DSM 17950 / CFBP 7177 / CIP 109463 / NCPPB 4357 / Et1/99), this protein is Glucosamine-6-phosphate deaminase.